Reading from the N-terminus, the 142-residue chain is Large ribosomal subunit protein uL13 (142 aa).

Belongs to the universal ribosomal protein uL13 family. As to quaternary structure, part of the 50S ribosomal subunit.

Functionally, this protein is one of the early assembly proteins of the 50S ribosomal subunit, although it is not seen to bind rRNA by itself. It is important during the early stages of 50S assembly. The polypeptide is Large ribosomal subunit protein uL13 (Buchnera aphidicola subsp. Acyrthosiphon pisum (strain 5A)).